A 122-amino-acid polypeptide reads, in one-letter code: Large ribosomal subunit protein uL14 (122 aa).

This sequence belongs to the universal ribosomal protein uL14 family. In terms of assembly, part of the 50S ribosomal subunit. Forms a cluster with proteins L3 and L19. In the 70S ribosome, L14 and L19 interact and together make contacts with the 16S rRNA in bridges B5 and B8.

In terms of biological role, binds to 23S rRNA. Forms part of two intersubunit bridges in the 70S ribosome. The protein is Large ribosomal subunit protein uL14 of Brucella anthropi (strain ATCC 49188 / DSM 6882 / CCUG 24695 / JCM 21032 / LMG 3331 / NBRC 15819 / NCTC 12168 / Alc 37) (Ochrobactrum anthropi).